Reading from the N-terminus, the 274-residue chain is Penicillin-insensitive murein endopeptidase (274 aa).

The signal sequence occupies residues 1-19; it reads MNKTAIALLALLASSASLA. 3 disulfide bridges follow: C44–C265, C187–C235, and C216–C223. 6 residues coordinate Zn(2+): H110, H113, D120, D147, H150, and H211. Residues 228-265 form a disordered region; that stretch reads LPPPGDGCGAELQSWFAPPKPGTTKPEKKTPPPLPPSC.

This sequence belongs to the peptidase M74 family. In terms of assembly, dimer. Zn(2+) serves as cofactor.

The protein resides in the periplasm. Murein endopeptidase that cleaves the D-alanyl-meso-2,6-diamino-pimelyl amide bond that connects peptidoglycan strands. Likely plays a role in the removal of murein from the sacculus. The polypeptide is Penicillin-insensitive murein endopeptidase (Shigella boydii serotype 18 (strain CDC 3083-94 / BS512)).